The primary structure comprises 301 residues: Mitochondrial substrate carrier family protein Z (301 aa).

The Mitochondrial intermembrane portion of the chain corresponds to 1–19 (MTGKEENKQQQHVNFPWKR). Solcar repeat units follow at residues 14–101 (NFPW…FTEQ), 116–200 (QQFG…ISDY), and 210–293 (LPVW…VMGI). A helical transmembrane segment spans residues 20–37 (LVAGAVAGTADVWACHPL). Residues 38 to 65 (DRIKTQLQNNPGKSIVGTFGDIVSKGKG) are Mitochondrial matrix-facing. Residues 66 to 86 (FTGGVNALYEGILPMTAEAIF) form a helical membrane-spanning segment. Topologically, residues 87-117 (KVGIRYFAFSWFTEQYKTTVYKGETLNKKQQ) are mitochondrial intermembrane. A helical transmembrane segment spans residues 118–138 (FGANLLGGAFAGTIESFVVVI). Residues 139–174 (PCELLKVRHMTQEHNKSFGTVFRDVLREEGFQGLYK) lie on the Mitochondrial matrix side of the membrane. A helical transmembrane segment spans residues 175 to 191 (GGSATLLRQITNHMIRF). The Mitochondrial intermembrane segment spans residues 192–212 (PTFYAISDYLKGGDHSVHLPV). The chain crosses the membrane as a helical span at residues 213–229 (WQNLSAGAIAGTASTLF). At 230–275 (NNPLDTIKTRMQKQGQNQTTMQVVRGIYQETGVKGYWAGVIPRILR) the chain is on the mitochondrial matrix side. A helical membrane pass occupies residues 276–296 (VAPGQAITWAVVELVMGILEP). The Mitochondrial intermembrane segment spans residues 297 to 301 (SSKKH).

This sequence belongs to the mitochondrial carrier (TC 2.A.29) family.

It is found in the mitochondrion inner membrane. Functionally, mitochondrial solute carriers shuttle metabolites, nucleotides, and cofactors through the mitochondrial inner membrane. This Dictyostelium discoideum (Social amoeba) protein is Mitochondrial substrate carrier family protein Z (mcfZ).